Consider the following 155-residue polypeptide: Deoxyuridine 5'-triphosphate nucleotidohydrolase (155 aa).

Substrate contacts are provided by residues 74–76, asparagine 87, and 91–93; these read RSG and LID.

Belongs to the dUTPase family. Requires Mg(2+) as cofactor.

It carries out the reaction dUTP + H2O = dUMP + diphosphate + H(+). It functions in the pathway pyrimidine metabolism; dUMP biosynthesis; dUMP from dCTP (dUTP route): step 2/2. Its function is as follows. This enzyme is involved in nucleotide metabolism: it produces dUMP, the immediate precursor of thymidine nucleotides and it decreases the intracellular concentration of dUTP so that uracil cannot be incorporated into DNA. The chain is Deoxyuridine 5'-triphosphate nucleotidohydrolase from Xylella fastidiosa (strain M12).